Consider the following 571-residue polypeptide: Podocalyxin (571 aa).

A signal peptide spans Met1–Ser22. Over His23–Pro474 the chain is Extracellular. The segment at Asn94–Ser361 is disordered. Polar residues predominate over residues Ser106–Ser116. Asn123 carries N-linked (GlcNAc...) asparagine glycosylation. 4 stretches are compositionally biased toward polar residues: residues Ile126 to Ala144, Asn151 to Ser169, Lys176 to Leu203, and Thr218 to Thr245. Asn199 carries an N-linked (GlcNAc...) asparagine glycan. The segment covering Thr282 to Pro300 has biased composition (low complexity). A compositionally biased stretch (pro residues) spans Ser301–Pro311. The span at Pro312–Ser322 shows a compositional bias: low complexity. N-linked (GlcNAc...) asparagine glycans are attached at residues Asn373 and Asn383. A helical membrane pass occupies residues Leu475–Cys495. Over Cys496 to Leu571 the chain is Cytoplasmic. Thr531 carries the phosphothreonine modification. Position 550 is a phosphoserine (Ser550). The residue at position 569 (Thr569) is a Phosphothreonine.

It belongs to the podocalyxin family. As to quaternary structure, found in a complex with EZR, PODXL and NHERF2. Associates with the actin cytoskeleton through complex formation with EZR and NHERF2. Interacts (via the C-terminal PDZ-binding motif DTHL) with NHERF1 (via the PDZ domains); interaction is not detected in glomerular epithelium cells. Interacts (via the C-terminal PDZ-binding motif DTHL) with NHERF2 (via the PDZ 1 domain); interaction is detected in glomerular epithelium cells. Interacts with EZR. Monomer; when associated with the membrane raft. Oligomer; when integrated in the apical membrane. Interacts with NHERF2. Interacts (via the C-terminal PDZ-binding motif DTHL) with NHERF1 (via the PDZ domains); the interaction take place early in the secretory pathway and is necessary for its apical membrane sorting. Post-translationally, N- and O-linked glycosylated. Sialoglycoprotein. Expressed in glomerular and tubular epithelial cells and peritubular capillaries of the kidney (at protein level). Expressed in heart, lung, renal cortex and medulla, kidney and muscle.

Its subcellular location is the apical cell membrane. It localises to the membrane raft. It is found in the cell projection. The protein localises to the lamellipodium. The protein resides in the filopodium. Its subcellular location is the ruffle. It localises to the microvillus. It is found in the membrane. Involved in the regulation of both adhesion and cell morphology and cancer progression. Functions as an anti-adhesive molecule that maintains an open filtration pathway between neighboring foot processes in the podocyte by charge repulsion. Acts as a pro-adhesive molecule, enhancing the adherence of cells to immobilized ligands, increasing the rate of migration and cell-cell contacts in an integrin-dependent manner. Induces the formation of apical actin-dependent microvilli. Involved in the formation of a preapical plasma membrane subdomain to set up initial epithelial polarization and the apical lumen formation during renal tubulogenesis. Plays a role in cancer development and aggressiveness by inducing cell migration and invasion through its interaction with the actin-binding protein EZR. Affects EZR-dependent signaling events, leading to increased activities of the MAPK and PI3K pathways in cancer cells. The protein is Podocalyxin (PODXL) of Canis lupus familiaris (Dog).